The following is a 177-amino-acid chain: Zinc metalloproteinase-disintegrin-like scutiarin (177 aa).

The Disintegrin domain occupies 1–63 (NPCCDAATCK…ECPADVFHKN (63 aa)). Intrachain disulfides connect cysteine 3-cysteine 26, cysteine 17-cysteine 23, cysteine 22-cysteine 48, cysteine 35-cysteine 55, cysteine 42-cysteine 74, cysteine 67-cysteine 79, cysteine 86-cysteine 136, cysteine 101-cysteine 147, cysteine 114-cysteine 124, and cysteine 131-cysteine 173. The D/ECD-tripeptide motif lies at 41–43 (ECD). Ca(2+) contacts are provided by aspartate 43, proline 44, glutamate 46, aspartate 58, and valine 59.

The protein belongs to the venom metalloproteinase (M12B) family. P-III subfamily. P-IIIa sub-subfamily. As to quaternary structure, monomer. Zn(2+) is required as a cofactor. Post-translationally, glycosylated. Expressed by the venom gland.

The protein resides in the secreted. Its function is as follows. Snake venom metalloproteinase that impairs hemostasis in the envenomed animal. The polypeptide is Zinc metalloproteinase-disintegrin-like scutiarin (Crotalus scutulatus scutulatus (Mojave rattlesnake)).